Reading from the N-terminus, the 182-residue chain is ATP-dependent protease subunit HslV (182 aa).

The active site involves threonine 12. Na(+) contacts are provided by alanine 167, cysteine 170, and threonine 173.

The protein belongs to the peptidase T1B family. HslV subfamily. In terms of assembly, a double ring-shaped homohexamer of HslV is capped on each side by a ring-shaped HslU homohexamer. The assembly of the HslU/HslV complex is dependent on binding of ATP.

Its subcellular location is the cytoplasm. It carries out the reaction ATP-dependent cleavage of peptide bonds with broad specificity.. Allosterically activated by HslU binding. Its function is as follows. Protease subunit of a proteasome-like degradation complex believed to be a general protein degrading machinery. This chain is ATP-dependent protease subunit HslV, found in Chlorobium limicola (strain DSM 245 / NBRC 103803 / 6330).